The sequence spans 404 residues: Argininosuccinate synthase (404 aa).

ATP contacts are provided by residues 11 to 19 (AYSGGLDTS) and A38. The L-citrulline site is built by Y91 and S96. G121 provides a ligand contact to ATP. Residues T123, N127, and D128 each coordinate L-aspartate. Position 127 (N127) interacts with L-citrulline. L-citrulline contacts are provided by R131, S182, S191, E267, and Y279.

This sequence belongs to the argininosuccinate synthase family. Type 1 subfamily. Homotetramer.

Its subcellular location is the cytoplasm. The catalysed reaction is L-citrulline + L-aspartate + ATP = 2-(N(omega)-L-arginino)succinate + AMP + diphosphate + H(+). It participates in amino-acid biosynthesis; L-arginine biosynthesis; L-arginine from L-ornithine and carbamoyl phosphate: step 2/3. The chain is Argininosuccinate synthase from Paramagnetospirillum magneticum (strain ATCC 700264 / AMB-1) (Magnetospirillum magneticum).